We begin with the raw amino-acid sequence, 39 residues long: Photosystem II reaction center protein J (39 aa).

A helical membrane pass occupies residues 9-29 (LWLVGLVGGFAVITIVSLFIY).

Belongs to the PsbJ family. PSII is composed of 1 copy each of membrane proteins PsbA, PsbB, PsbC, PsbD, PsbE, PsbF, PsbH, PsbI, PsbJ, PsbK, PsbL, PsbM, PsbT, PsbX, PsbY, PsbZ, Psb30/Ycf12, at least 3 peripheral proteins of the oxygen-evolving complex and a large number of cofactors. It forms dimeric complexes.

The protein resides in the plastid. It localises to the chloroplast thylakoid membrane. Functionally, one of the components of the core complex of photosystem II (PSII). PSII is a light-driven water:plastoquinone oxidoreductase that uses light energy to abstract electrons from H(2)O, generating O(2) and a proton gradient subsequently used for ATP formation. It consists of a core antenna complex that captures photons, and an electron transfer chain that converts photonic excitation into a charge separation. This Thalassiosira pseudonana (Marine diatom) protein is Photosystem II reaction center protein J.